A 204-amino-acid polypeptide reads, in one-letter code: Facilitator of iron transport 3 (204 aa).

A signal peptide spans methionine 1 to alanine 18. Disordered stretches follow at residues serine 84 to serine 104 and glutamate 133 to alanine 175. Residues serine 135–alanine 175 are compositionally biased toward low complexity. Glycine 182 carries the GPI-anchor amidated glycine lipid modification. The propeptide at alanine 183–leucine 204 is removed in mature form.

Post-translationally, the GPI-anchor is attached to the protein in the endoplasmic reticulum and serves to target the protein to the cell surface. There, the glucosamine-inositol phospholipid moiety is cleaved off and the GPI-modified mannoprotein is covalently attached via its lipidless GPI glycan remnant to the 1,6-beta-glucan of the outer cell wall layer.

It localises to the secreted. The protein localises to the cell wall. Its subcellular location is the membrane. Functionally, involved in the uptake of non-siderophore and siderophore sources of iron. Has a role in the retention of iron in the cell wall and periplasmic space. The polypeptide is Facilitator of iron transport 3 (FIT3) (Saccharomyces cerevisiae (strain ATCC 204508 / S288c) (Baker's yeast)).